A 130-amino-acid polypeptide reads, in one-letter code: Protein ApaG (130 aa).

The 125-residue stretch at E3–L127 folds into the ApaG domain.

This Maricaulis maris (strain MCS10) (Caulobacter maris) protein is Protein ApaG.